A 383-amino-acid chain; its full sequence is tRNA(Met) cytidine acetate ligase (383 aa).

ATP is bound by residues 7-20, Gly101, Asn153, and 178-179; these read IAEF…HEFL and RI.

Belongs to the TmcAL family.

Its subcellular location is the cytoplasm. The enzyme catalyses cytidine(34) in elongator tRNA(Met) + acetate + ATP = N(4)-acetylcytidine(34) in elongator tRNA(Met) + AMP + diphosphate. In terms of biological role, catalyzes the formation of N(4)-acetylcytidine (ac(4)C) at the wobble position of elongator tRNA(Met), using acetate and ATP as substrates. First activates an acetate ion to form acetyladenylate (Ac-AMP) and then transfers the acetyl group to tRNA to form ac(4)C34. This chain is tRNA(Met) cytidine acetate ligase, found in Lactobacillus acidophilus (strain ATCC 700396 / NCK56 / N2 / NCFM).